Consider the following 323-residue polypeptide: Coiled-coil domain-containing protein 160 (323 aa).

Residues 143 to 290 are a coiled coil; the sequence is SKLRLNLLNE…IKNELRTEKS (148 aa).

The protein belongs to the CCDC160 family.

The polypeptide is Coiled-coil domain-containing protein 160 (CCDC160) (Bos taurus (Bovine)).